We begin with the raw amino-acid sequence, 161 residues long: GTP-dependent dephospho-CoA kinase (161 aa).

GTP is bound by residues Asp40, Val41, Val42, Asp59, and Glu112.

This sequence belongs to the GTP-dependent DPCK family.

The enzyme catalyses 3'-dephospho-CoA + GTP = GDP + CoA + H(+). Its pathway is cofactor biosynthesis; coenzyme A biosynthesis. Catalyzes the GTP-dependent phosphorylation of the 3'-hydroxyl group of dephosphocoenzyme A to form coenzyme A (CoA). In Methanoculleus marisnigri (strain ATCC 35101 / DSM 1498 / JR1), this protein is GTP-dependent dephospho-CoA kinase.